The primary structure comprises 657 residues: Kinesin-like protein KIF22 (657 aa).

The disordered stretch occupies residues 1–33 (MNVRAKKKPQQREMASASSGPSRSLSKGGVSRR). Residues 16-33 (SASSGPSRSLSKGGVSRR) show a composition bias toward low complexity. Residues 38–360 (RVRVAVRLRP…LNFTARSKEV (323 aa)) form the Kinesin motor domain. ATP is bound at residue 119 to 126 (GPTGAGKT). The disordered stretch occupies residues 388-415 (PSEAKKAKGPEEESTGSPESTAAPASAS). Residues 402–415 (TGSPESTAAPASAS) show a composition bias toward low complexity. A phosphoserine mark is found at Ser-404, Ser-419, and Ser-444. Residue Lys-457 forms a Glycyl lysine isopeptide (Lys-Gly) (interchain with G-Cter in SUMO2) linkage. Residues 457-502 (KRERMVLIKTVEEKNLEIERLKMKQKELEAKVLAQEALDPKEKENT) adopt a coiled-coil conformation. Phosphoserine occurs at positions 537, 554, and 573.

This sequence belongs to the TRAFAC class myosin-kinesin ATPase superfamily. Kinesin family. As to quaternary structure, interacts with FAM83D and SIAH1. Post-translationally, ubiquitinated; mediated by SIAH1 and leading to its subsequent proteasomal degradation.

Its subcellular location is the nucleus. The protein localises to the cytoplasm. It localises to the cytoskeleton. Functionally, kinesin family member that is involved in spindle formation and the movements of chromosomes during mitosis and meiosis. Binds to microtubules and to DNA. Plays a role in congression of laterally attached chromosomes in NDC80-depleted cells. This is Kinesin-like protein KIF22 (Kif22) from Rattus norvegicus (Rat).